Reading from the N-terminus, the 50-residue chain is Temporin-SHb (50 aa).

The first 10 residues, Phe-1–Cys-10, serve as a signal peptide directing secretion. Residues Glu-11–Arg-35 constitute a propeptide that is removed on maturation. Positions Gln-12 to Glu-31 are disordered. Over residues Arg-14–Val-30 the composition is skewed to acidic residues. Leu-48 is modified (leucine amide).

The protein belongs to the frog skin active peptide (FSAP) family. Temporin subfamily. In terms of tissue distribution, expressed by the skin glands.

Its subcellular location is the secreted. Amphipathic alpha-helical peptide with no antimicrobial activity. Does not display anti-leishmania activity. Does not show hemolytic activity (LC(50)&gt;116 uM). The sequence is that of Temporin-SHb from Pelophylax saharicus (Sahara frog).